A 1051-amino-acid polypeptide reads, in one-letter code: Carbamoyl phosphate synthase large chain (1051 aa).

The tract at residues 1-399 (MRETPKKVLV…SLQKAIRMLD (399 aa)) is carboxyphosphate synthetic domain. ATP contacts are provided by Arg-127, Arg-167, Gly-173, Gly-174, Lys-206, Leu-208, Glu-213, Gly-239, Val-240, His-241, Gln-282, and Glu-296. The region spanning 131–325 (RETMIENNLP…LAYVSAKLAL (195 aa)) is the ATP-grasp 1 domain. Mg(2+) is bound by residues Gln-282, Glu-296, and Asn-298. Residues Gln-282, Glu-296, and Asn-298 each coordinate Mn(2+). The tract at residues 400–548 (IGEPGVVGGK…LTYNGTEDDI (149 aa)) is oligomerization domain. The tract at residues 549–930 (EFSQGNKLLI…LKSWLSSMPN (382 aa)) is carbamoyl phosphate synthetic domain. The 191-residue stretch at 673 to 863 (SKLLDKLGIS…LINESMKAIF (191 aa)) folds into the ATP-grasp 2 domain. The ATP site is built by Arg-709, Lys-748, Ile-750, Glu-755, Gly-779, Val-780, His-781, Ser-782, Gln-822, and Glu-834. Positions 822, 834, and 836 each coordinate Mg(2+). Mn(2+) contacts are provided by Gln-822, Glu-834, and Asn-836. Positions 930–1051 (NRIPNKNGIA…FEISEYGGGI (122 aa)) constitute an MGS-like domain. Residues 931-1051 (RIPNKNGIAL…FEISEYGGGI (121 aa)) are allosteric domain.

It belongs to the CarB family. In terms of assembly, composed of two chains; the small (or glutamine) chain promotes the hydrolysis of glutamine to ammonia, which is used by the large (or ammonia) chain to synthesize carbamoyl phosphate. Tetramer of heterodimers (alpha,beta)4. The cofactor is Mg(2+). Requires Mn(2+) as cofactor.

It carries out the reaction hydrogencarbonate + L-glutamine + 2 ATP + H2O = carbamoyl phosphate + L-glutamate + 2 ADP + phosphate + 2 H(+). The enzyme catalyses hydrogencarbonate + NH4(+) + 2 ATP = carbamoyl phosphate + 2 ADP + phosphate + 2 H(+). It functions in the pathway amino-acid biosynthesis; L-arginine biosynthesis; carbamoyl phosphate from bicarbonate: step 1/1. The protein operates within pyrimidine metabolism; UMP biosynthesis via de novo pathway; (S)-dihydroorotate from bicarbonate: step 1/3. Its function is as follows. Large subunit of the glutamine-dependent carbamoyl phosphate synthetase (CPSase). CPSase catalyzes the formation of carbamoyl phosphate from the ammonia moiety of glutamine, carbonate, and phosphate donated by ATP, constituting the first step of 2 biosynthetic pathways, one leading to arginine and/or urea and the other to pyrimidine nucleotides. The large subunit (synthetase) binds the substrates ammonia (free or transferred from glutamine from the small subunit), hydrogencarbonate and ATP and carries out an ATP-coupled ligase reaction, activating hydrogencarbonate by forming carboxy phosphate which reacts with ammonia to form carbamoyl phosphate. The sequence is that of Carbamoyl phosphate synthase large chain from Saccharolobus solfataricus (strain ATCC 35092 / DSM 1617 / JCM 11322 / P2) (Sulfolobus solfataricus).